The primary structure comprises 178 residues: Large ribosomal subunit protein uL6 (178 aa).

Belongs to the universal ribosomal protein uL6 family. In terms of assembly, part of the 50S ribosomal subunit.

Functionally, this protein binds to the 23S rRNA, and is important in its secondary structure. It is located near the subunit interface in the base of the L7/L12 stalk, and near the tRNA binding site of the peptidyltransferase center. In Symbiobacterium thermophilum (strain DSM 24528 / JCM 14929 / IAM 14863 / T), this protein is Large ribosomal subunit protein uL6.